We begin with the raw amino-acid sequence, 885 residues long: Phycobiliprotein ApcE (885 aa).

A (2R,3E)-phycocyanobilin-binding site is contributed by C185. PBS-linker domains are found at residues 242-422, 498-680, and 694-871; these read DVQG…FRKV, KSIG…NSKK, and NSIQ…KQSS.

Belongs to the phycobilisome linker protein family. Contains one covalently linked bilin chromophore. This protein autochromophorylates (Potential).

It is found in the plastid. The protein resides in the chloroplast thylakoid membrane. Its function is as follows. This protein is postulated to act both as terminal energy acceptor and as a linker polypeptide that stabilizes the phycobilisome architecture. May have intrinsic bilin lyase activity. The chain is Phycobiliprotein ApcE (apcE) from Aglaothamnion neglectum (Red alga).